Consider the following 661-residue polypeptide: Probable urea active transporter 3 (661 aa).

Helical transmembrane passes span 13-33, 56-76, 86-106, 132-152, 165-185, 197-217, 251-271, 288-308, 352-372, 397-417, 419-439, 454-474, 495-515, 556-576, and 591-611; these read GIVI…TYVL, GLIS…LTSA, GSMW…VIAL, AVFL…LLLG, VVAA…SGGL, VIVY…SVHI, AVFV…CDPS, YFAG…AAAL, AGVL…LVAF, VTHV…VLFN, IGIT…PAVF, GMII…VGSC, VGNF…SYFF, IGIF…PLPM, and WIIV…FYPL.

This sequence belongs to the sodium:solute symporter (SSF) (TC 2.A.21) family.

It localises to the membrane. Its subcellular location is the golgi apparatus membrane. Involved in active transport of urea. The protein is Probable urea active transporter 3 (dur3-3) of Schizosaccharomyces pombe (strain 972 / ATCC 24843) (Fission yeast).